Here is a 319-residue protein sequence, read N- to C-terminus: Acetyl-coenzyme A carboxylase carboxyl transferase subunit alpha (319 aa).

The 262-residue stretch at N35–D296 folds into the CoA carboxyltransferase C-terminal domain.

It belongs to the AccA family. As to quaternary structure, acetyl-CoA carboxylase is a heterohexamer composed of biotin carboxyl carrier protein (AccB), biotin carboxylase (AccC) and two subunits each of ACCase subunit alpha (AccA) and ACCase subunit beta (AccD).

Its subcellular location is the cytoplasm. The enzyme catalyses N(6)-carboxybiotinyl-L-lysyl-[protein] + acetyl-CoA = N(6)-biotinyl-L-lysyl-[protein] + malonyl-CoA. It participates in lipid metabolism; malonyl-CoA biosynthesis; malonyl-CoA from acetyl-CoA: step 1/1. Its function is as follows. Component of the acetyl coenzyme A carboxylase (ACC) complex. First, biotin carboxylase catalyzes the carboxylation of biotin on its carrier protein (BCCP) and then the CO(2) group is transferred by the carboxyltransferase to acetyl-CoA to form malonyl-CoA. The sequence is that of Acetyl-coenzyme A carboxylase carboxyl transferase subunit alpha from Salmonella paratyphi C (strain RKS4594).